A 447-amino-acid polypeptide reads, in one-letter code: Phosphoglucosamine mutase (447 aa).

The active-site Phosphoserine intermediate is S104. Mg(2+)-binding residues include S104, D243, D245, and D247. Phosphoserine is present on S104.

The protein belongs to the phosphohexose mutase family. The cofactor is Mg(2+). In terms of processing, activated by phosphorylation.

It carries out the reaction alpha-D-glucosamine 1-phosphate = D-glucosamine 6-phosphate. Functionally, catalyzes the conversion of glucosamine-6-phosphate to glucosamine-1-phosphate. This is Phosphoglucosamine mutase from Corynebacterium aurimucosum (strain ATCC 700975 / DSM 44827 / CIP 107346 / CN-1) (Corynebacterium nigricans).